The primary structure comprises 504 residues: MEEFKGYLELDRSQQQDFLYSLSFQESIYTLAHDHGLNRLILNADSDKKYSLLIVKCLITQMYQQNLLIFSANEPKQNLFFGHNTDLYCRILFEAFTVILEIPFSLRERPFIERKEMVQFLNLRSIHSIFPFLEDKFSHSNYVVDILLPHSIHLEILVQTLRYWVKDASSLHLLRFFLHQYHNWNSFIIPKQSRFFFXKKKKBQRLFFFLYNSKVCEYESIFIFLRNQSVHLRSISSEAFLERIYFYEKMEYFLEVYAKDFQAFFWLFKDLFMHYVRYQGKCILVSKGTSFLMSKWKYYLVNLWQSCFYMWSQPGRVQINQFSNYSLDFLGYLSSVRRNPSMTWSQMLENSFLISLVIKKFDTRVPTIPLIRSLSKAKFSNILGYPISKASWADFSDSNIIDRFGRIYRNLSHYHSGSPKKTSLYKVKYILRLSCVRTLARKHKSKVRSFLKRFGSGLLEEFFMEEEQVLTLNLQKISFTLRRFYGRQIWYLDIFCINDLAKSE.

This sequence belongs to the intron maturase 2 family. MatK subfamily.

The protein resides in the plastid. The protein localises to the chloroplast. Its function is as follows. Usually encoded in the trnK tRNA gene intron. Probably assists in splicing its own and other chloroplast group II introns. In Impatiens capensis (Spotted jewelweed), this protein is Maturase K.